The following is a 485-amino-acid chain: MQIYNSLSRRKELFTPAVPGKVNMYVCGITAYDLCHIGHARSAVVFDVLVRYLRHTGLDVTFARNFTDVDDKIIKRANEEGLTSQQVAEKYIDTFYEDMDRLNVLRADIEPKATGHILEMIALCEKLIAKGKAYATPSGDVYFRVRSFPEYGKLSGRDIDDMRSGARVAPGEEKEDPLDFALWKSAKPGEPSWTSPWGEGRPGWHIECSAMSEKHMPLPLDIHGGGQDLIFPHHENEIAQTEAALDKPFVRYWMHNGFVQVDAEKMSKSLGNFKTIRDILEGYLPEVLRFFLLTKHYRSPIDFTFDSMDEAEKSLKRIYEALSLARTERGRSKWSATPLPADVTAEFDTLDRAFDEALEDDLNTAAALGHVFGTIRLVNRLLEDKNLRKSAETLALLERLDGLVAKWMKVLGVFGREPEAFLSDLKECRIRRKGIDTTKVDALLEERKSVRAAKDFARADAIRDELAALGIEVRDTPSGAVWDVL.

Zn(2+) is bound at residue C27. Residues 29 to 39 (ITAYDLCHIGH) carry the 'HIGH' region motif. 3 residues coordinate Zn(2+): C208, H233, and E237. Residues 265-269 (KMSKS) carry the 'KMSKS' region motif. An ATP-binding site is contributed by K268.

This sequence belongs to the class-I aminoacyl-tRNA synthetase family. In terms of assembly, monomer. It depends on Zn(2+) as a cofactor.

Its subcellular location is the cytoplasm. The catalysed reaction is tRNA(Cys) + L-cysteine + ATP = L-cysteinyl-tRNA(Cys) + AMP + diphosphate. This chain is Cysteine--tRNA ligase, found in Nitratidesulfovibrio vulgaris (strain DP4) (Desulfovibrio vulgaris).